Consider the following 369-residue polypeptide: Porphobilinogen deaminase, chloroplastic (369 aa).

The N-terminal 46 residues, 1-46 (MEMTLYSSSSFSLPSAPSNPSLSLFTSSFRFSSFKTSPFSKCRIRA), are a transit peptide targeting the chloroplast. S-(dipyrrolylmethanemethyl)cysteine is present on Cys303.

Belongs to the HMBS family. The cofactor is dipyrromethane.

The protein localises to the plastid. It is found in the chloroplast. It carries out the reaction 4 porphobilinogen + H2O = hydroxymethylbilane + 4 NH4(+). Its pathway is porphyrin-containing compound metabolism; protoporphyrin-IX biosynthesis; coproporphyrinogen-III from 5-aminolevulinate: step 2/4. It participates in porphyrin-containing compound metabolism; chlorophyll biosynthesis. In terms of biological role, tetrapolymerization of the monopyrrole PBG into the hydroxymethylbilane pre-uroporphyrinogen in several discrete steps. In Pisum sativum (Garden pea), this protein is Porphobilinogen deaminase, chloroplastic (HEMC).